The primary structure comprises 319 residues: Acetyl-coenzyme A carboxylase carboxyl transferase subunit alpha (319 aa).

In terms of domain architecture, CoA carboxyltransferase C-terminal spans 35-296 (DLDKEIEQLE…KATLLRQLED (262 aa)).

The protein belongs to the AccA family. As to quaternary structure, acetyl-CoA carboxylase is a heterohexamer composed of biotin carboxyl carrier protein (AccB), biotin carboxylase (AccC) and two subunits each of ACCase subunit alpha (AccA) and ACCase subunit beta (AccD).

It is found in the cytoplasm. The enzyme catalyses N(6)-carboxybiotinyl-L-lysyl-[protein] + acetyl-CoA = N(6)-biotinyl-L-lysyl-[protein] + malonyl-CoA. It participates in lipid metabolism; malonyl-CoA biosynthesis; malonyl-CoA from acetyl-CoA: step 1/1. Functionally, component of the acetyl coenzyme A carboxylase (ACC) complex. First, biotin carboxylase catalyzes the carboxylation of biotin on its carrier protein (BCCP) and then the CO(2) group is transferred by the carboxyltransferase to acetyl-CoA to form malonyl-CoA. The protein is Acetyl-coenzyme A carboxylase carboxyl transferase subunit alpha of Vibrio parahaemolyticus serotype O3:K6 (strain RIMD 2210633).